Here is a 410-residue protein sequence, read N- to C-terminus: Demethyl-4-deoxygadusol synthase (410 aa).

NAD(+)-binding positions include 56–58, 87–90, 119–123, 143–144, K156, K165, and 183–186; these read DAN, EPDK, GLITD, TT, and LLRT. Residues E198, H271, and H287 each contribute to the Zn(2+) site.

This sequence belongs to the sugar phosphate cyclases superfamily. DDGS family. As to quaternary structure, homodimer. Requires NAD(+) as cofactor. Co(2+) serves as cofactor. It depends on Zn(2+) as a cofactor.

The catalysed reaction is D-sedoheptulose 7-phosphate = (R)-demethyl-4-deoxygadusol + phosphate + H2O + H(+). Catalyzes the conversion of sedoheptulose 7-phosphate to demethyl-4-deoxygadusol (DDG). Involved in the synthesis of the mycosporine-like amino acid shinorine, a natural sunscreen compound that protects the cell against UV radiation. This is Demethyl-4-deoxygadusol synthase from Trichormus variabilis (strain ATCC 29413 / PCC 7937) (Anabaena variabilis).